The sequence spans 184 residues: Photosystem I assembly protein Ycf4 (184 aa).

A run of 2 helical transmembrane segments spans residues 22-42 (FFWACILFLGSLGFLLVGTSS) and 57-77 (IPFFPQGIVMSFYGIAGLFIS).

This sequence belongs to the Ycf4 family.

It localises to the plastid. The protein localises to the chloroplast thylakoid membrane. Its function is as follows. Seems to be required for the assembly of the photosystem I complex. This chain is Photosystem I assembly protein Ycf4, found in Ceratophyllum demersum (Rigid hornwort).